A 61-amino-acid chain; its full sequence is Alpha-conotoxin CnIJ (61 aa).

The first 17 residues, 1 to 17 (MMFTVFLLVVLTTTVVS), serve as a signal peptide directing secretion. Positions 18 to 44 (FPSDSASDGRDDEAKDERSDMYELKRN) are excised as a propeptide. Disulfide bonds link Cys47–Cys52 and Cys48–Cys59. Cys59 bears the Cysteine amide mark.

The protein belongs to the conotoxin A superfamily. As to expression, expressed by the venom duct.

It localises to the secreted. The polypeptide is Alpha-conotoxin CnIJ (Conus consors (Singed cone)).